Consider the following 485-residue polypeptide: Iroquois-class homeodomain protein IRX-4 (485 aa).

A DNA-binding region (homeobox; TALE-type) is located at residues 142–203; sequence GTRRKNATRE…NARRRLKKEN (62 aa). A disordered region spans residues 206–313; it reads TWPPRNKCSD…EEEEAAERAR (108 aa). The span at 221–232 shows a compositional bias: acidic residues; the sequence is EEEEEEEEECSQ. Positions 234 to 253 are enriched in basic and acidic residues; the sequence is DAMKSEKAEEPTGKEEKELE. Residues 254–269 are compositionally biased toward acidic residues; sequence LSDLEDLDAAESESSE. Pro residues predominate over residues 282–294; sequence HPLPGGGPPPRAA.

It belongs to the TALE/IRO homeobox family. Ventricles of the heart, developing feather buds, retina, hindbrain.

The protein localises to the nucleus. Its function is as follows. Regulates the chamber-specific expression of myosin isoforms by activating the expression of the ventricle myosin heavy chain-1 (Vmhc1) and suppressing the expression of the atrial myosin heavy chain-1 (Amhc1) in the ventricles. May play a critical role in establishing chamber-specific gene expression in the developing heart. The chain is Iroquois-class homeodomain protein IRX-4 (IRX4) from Gallus gallus (Chicken).